The primary structure comprises 306 residues: Agmatinase (306 aa).

Positions 126, 149, 151, 153, 230, and 232 each coordinate Mn(2+).

Belongs to the arginase family. Agmatinase subfamily. Mn(2+) serves as cofactor.

The catalysed reaction is agmatine + H2O = urea + putrescine. It participates in amine and polyamine biosynthesis; putrescine biosynthesis via agmatine pathway; putrescine from agmatine: step 1/1. In terms of biological role, catalyzes the formation of putrescine from agmatine. The polypeptide is Agmatinase (Serratia proteamaculans (strain 568)).